A 927-amino-acid chain; its full sequence is Roc-COR-CHAT protease (927 aa).

LRR repeat units follow at residues 38–61 (AGQVTALSIGNSSLKKLVLGTEAQ), 83–107 (LPHLTHLYLNNCAIKDITIPKGFRS), 109–125 (QQVYLQKNGLTELVFEG), and 127–151 (CPALVLLDVSENQLKGLSFHSGFRA). Residues 152-170 (LKYIYATNNVLQKITFNRS) are LRR 5. LRR repeat units follow at residues 171-194 (MRLLNTLHLAKNQLTELAPFLSEI) and 195-217 (ETMETLYLQGNQLLRIDREIWDR). The 188-residue stretch at 436–623 (EWLGVKEDLN…ELRWKKGVVL (188 aa)) folds into the COR domain. Catalysis depends on residues histidine 796 and cysteine 840.

Its function is as follows. A dedicated protease for gasdermin bGSDM; cleaves the bGSDM precursor, releasing the pore-forming moiety, which integrates into the membrane and triggers cell death. Probably involved in defense against bacteriophages. Expression of bGSDM and this neighboring protease is highly toxic in E.coli. Cells expressing the gene pair stop dividing and lose membrane integrity. Both proteins are required to kill E.coli. The bGSDM recognition site is larger than the 8 residues surrounding the cleavage site; replacement of the endogenous recognition site by the Runella site (NRVLGENM) in a number of other bGSDMs is not sufficient for them to be cleaved. This Runella zeae (strain ATCC BAA-293 / DSM 19591 / LMG 21438 / NS12) protein is Roc-COR-CHAT protease.